The following is a 314-amino-acid chain: tRNA pseudouridine synthase B (314 aa).

His43 is a binding site for substrate. Residue Asp48 is the Nucleophile of the active site. Substrate contacts are provided by Tyr76, Tyr179, and Leu200.

This sequence belongs to the pseudouridine synthase TruB family. Type 1 subfamily.

It catalyses the reaction uridine(55) in tRNA = pseudouridine(55) in tRNA. Responsible for synthesis of pseudouridine from uracil-55 in the psi GC loop of transfer RNAs. In Salmonella arizonae (strain ATCC BAA-731 / CDC346-86 / RSK2980), this protein is tRNA pseudouridine synthase B.